Consider the following 162-residue polypeptide: MRSKFKDEHPFEKRKAEAERIRQKYSDRIPPSPHSPASRLIGGAPRPPVITADLVSTVEDSAPLTKAFAVQVICEKVEKSDIATIDKKKYLVPADLTVGQFVYVIRKRIKLSPEKAIFIFVDEVLPPTAALMSSIYEEHKDEDGFLYITYSGENTFGGFETA.

Basic and acidic residues predominate over residues 1-27; that stretch reads MRSKFKDEHPFEKRKAEAERIRQKYSD. The tract at residues 1–42 is disordered; sequence MRSKFKDEHPFEKRKAEAERIRQKYSDRIPPSPHSPASRLIG. Gly157 is lipidated: Phosphatidylethanolamine amidated glycine. Residues 158-162 constitute a propeptide, removed in mature form; sequence GFETA.

This sequence belongs to the ATG8 family.

Its subcellular location is the cytoplasmic vesicle. The protein resides in the autophagosome membrane. It localises to the vacuole membrane. Functionally, ubiquitin-like modifier involved in autophagosome formation. With ATG4, mediates the delivery of the autophagosomes to the vacuole via the microtubule cytoskeleton. Required for selective autophagic degradation of the nucleus (nucleophagy) as well as for mitophagy which contributes to regulate mitochondrial quantity and quality by eliminating the mitochondria to a basal level to fulfill cellular energy requirements and preventing excess ROS production. Also participates in membrane fusion events that take place in the early secretory pathway. Also involved in endoplasmic reticulum-specific autophagic process and is essential for the survival of cells subjected to severe ER stress. The ATG8-PE conjugate mediates tethering between adjacent membranes and stimulates membrane hemifusion, leading to expansion of the autophagosomal membrane during autophagy. In Colletotrichum higginsianum (strain IMI 349063) (Crucifer anthracnose fungus), this protein is Autophagy-related protein 8.